Reading from the N-terminus, the 264-residue chain is tRNA pseudouridine synthase A (264 aa).

Asp-51 (nucleophile) is an active-site residue. Tyr-109 contributes to the substrate binding site.

It belongs to the tRNA pseudouridine synthase TruA family. As to quaternary structure, homodimer.

The catalysed reaction is uridine(38/39/40) in tRNA = pseudouridine(38/39/40) in tRNA. Its function is as follows. Formation of pseudouridine at positions 38, 39 and 40 in the anticodon stem and loop of transfer RNAs. This is tRNA pseudouridine synthase A from Yersinia pseudotuberculosis serotype O:1b (strain IP 31758).